Here is a 132-residue protein sequence, read N- to C-terminus: Large ribosomal subunit protein bL17 (132 aa).

It belongs to the bacterial ribosomal protein bL17 family. Part of the 50S ribosomal subunit. Contacts protein L32.

This Leptothrix cholodnii (strain ATCC 51168 / LMG 8142 / SP-6) (Leptothrix discophora (strain SP-6)) protein is Large ribosomal subunit protein bL17.